Here is a 684-residue protein sequence, read N- to C-terminus: Glycine--tRNA ligase beta subunit (684 aa).

The protein belongs to the class-II aminoacyl-tRNA synthetase family. In terms of assembly, tetramer of two alpha and two beta subunits.

It localises to the cytoplasm. It catalyses the reaction tRNA(Gly) + glycine + ATP = glycyl-tRNA(Gly) + AMP + diphosphate. This is Glycine--tRNA ligase beta subunit from Pseudomonas aeruginosa (strain ATCC 15692 / DSM 22644 / CIP 104116 / JCM 14847 / LMG 12228 / 1C / PRS 101 / PAO1).